The following is a 411-amino-acid chain: Proteasome-activating nucleotidase 2 (411 aa).

Residues 35–75 adopt a coiled-coil conformation; it reads IVAVNGELQAQLDDVEARREELREEVNRLQRENETLKTASL. Residues 196–201 and histidine 335 each bind ATP; that span reads GTGKTM. The interval 408–411 is docks into pockets in the proteasome alpha-ring to cause gate opening; that stretch reads SYIQ.

The protein belongs to the AAA ATPase family. Homohexamer. The hexameric complex has a two-ring architecture resembling a top hat that caps the 20S proteasome core at one or both ends. Upon ATP-binding, the C-terminus of PAN interacts with the alpha-rings of the proteasome core by binding to the intersubunit pockets.

The protein localises to the cytoplasm. Functionally, ATPase which is responsible for recognizing, binding, unfolding and translocation of substrate proteins into the archaeal 20S proteasome core particle. Is essential for opening the gate of the 20S proteasome via an interaction with its C-terminus, thereby allowing substrate entry and access to the site of proteolysis. Thus, the C-termini of the proteasomal ATPase function like a 'key in a lock' to induce gate opening and therefore regulate proteolysis. Unfolding activity requires energy from ATP hydrolysis, whereas ATP binding alone promotes ATPase-20S proteasome association which triggers gate opening, and supports translocation of unfolded substrates. The polypeptide is Proteasome-activating nucleotidase 2 (Halobacterium salinarum (strain ATCC 700922 / JCM 11081 / NRC-1) (Halobacterium halobium)).